The sequence spans 119 residues: Holo-[acyl-carrier-protein] synthase (119 aa).

Mg(2+)-binding residues include aspartate 2 and glutamate 51.

Belongs to the P-Pant transferase superfamily. AcpS family. The cofactor is Mg(2+).

It localises to the cytoplasm. It catalyses the reaction apo-[ACP] + CoA = holo-[ACP] + adenosine 3',5'-bisphosphate + H(+). Its function is as follows. Transfers the 4'-phosphopantetheine moiety from coenzyme A to a Ser of acyl-carrier-protein. The polypeptide is Holo-[acyl-carrier-protein] synthase (Chlorobium luteolum (strain DSM 273 / BCRC 81028 / 2530) (Pelodictyon luteolum)).